A 935-amino-acid chain; its full sequence is GPI ethanolamine phosphate transferase 1 (935 aa).

Residues 1–5 (MFGRL) lie on the Cytoplasmic side of the membrane. A helical membrane pass occupies residues 6-26 (LLLGILFHVVFLKSIFDIYFV). The Lumenal segment spans residues 27–449 (TPLIHGMKQY…LQRYDWLLLR (423 aa)). Residues asparagine 86, asparagine 134, asparagine 315, and asparagine 398 are each glycosylated (N-linked (GlcNAc...) asparagine). Residues 450 to 470 (SIVFFGYLSWIGYVICFVFSL) traverse the membrane as a helical segment. Residues 471-483 (NIEPSSKIVKPVS) lie on the Cytoplasmic side of the membrane. Residues 484-503 (VVKRVAFNIPFLLICIFFYI) form a helical membrane-spanning segment. Over 504 to 509 (QSSPPF) the chain is Lumenal. A helical transmembrane segment spans residues 510 to 530 (YYGYALFPTIFLQLIHSIFPN). The Cytoplasmic segment spans residues 531–547 (TKLGFKNFLTVAKQKHG). The helical transmembrane segment at 548 to 568 (FSLLKILFISLCILCLLQFIV) threads the bilayer. Residues 569–576 (YSYFHREG) are Lumenal-facing. A helical membrane pass occupies residues 577 to 597 (FSVILMGLAAWPWLLHADYAF). Over 598–600 (SHK) the chain is Cytoplasmic. The helical transmembrane segment at 601–621 (TISVSWSVLTSLLCFFTILPV) threads the bilayer. Residues 622 to 626 (NKKES) are Lumenal-facing. The chain crosses the membrane as a helical span at residues 627–647 (LLFIFAGGFAMSVAGVFYILY). At 648-663 (RRNQAFQYSSTVTNKQ) the chain is on the cytoplasmic side. A helical transmembrane segment spans residues 664–684 (LVLQVLIIMATVPVTLKIADS). Over 685 to 688 (LQRN) the chain is Lumenal. The helical transmembrane segment at 689 to 709 (IAIPPILRLVAFGLFITSYII) threads the bilayer. Over 710–737 (PSHHIRSCKHYFLDRLAILFLTFSPTMC) the chain is Cytoplasmic. Residues 738 to 758 (MLSISFEALFYVVLFITLGLW) form a helical membrane-spanning segment. Over 759-792 (MELETELQKYTEQLHPEYSRKKDAKFHLSLSHIR) the chain is Lumenal. Residues 793-813 (ISLFFYIFINVAFFGTGNVAS) traverse the membrane as a helical segment. The Cytoplasmic segment spans residues 814–835 (LSTFALDSVKRFIPVFNPVTQG). The helical transmembrane segment at 836–856 (ALLMYTILVPFIALSAAFGIM) threads the bilayer. Topologically, residues 857-865 (NKRLGGIQQ) are lumenal. Residues 866–886 (VTFFLAVGMADIVTINFFYLV) form a helical membrane-spanning segment. The Cytoplasmic segment spans residues 887–894 (KDEGSWKD). The chain crosses the membrane as a helical span at residues 895 to 915 (IGVSISHFCISNFLILFITAL). Residues 916 to 935 (EHASAILCKNITYTIHEKVN) are Lumenal-facing. N-linked (GlcNAc...) asparagine glycosylation is present at asparagine 925.

This sequence belongs to the PIGG/PIGN/PIGO family. PIGN subfamily.

The protein localises to the endoplasmic reticulum membrane. It participates in glycolipid biosynthesis; glycosylphosphatidylinositol-anchor biosynthesis. Functionally, ethanolamine phosphate transferase involved in glycosylphosphatidylinositol-anchor biosynthesis. Transfers ethanolamine phosphate to the first alpha-1,4-linked mannose of the glycosylphosphatidylinositol precursor of GPI-anchor. The sequence is that of GPI ethanolamine phosphate transferase 1 (its8) from Schizosaccharomyces pombe (strain 972 / ATCC 24843) (Fission yeast).